We begin with the raw amino-acid sequence, 303 residues long: tRNA dimethylallyltransferase 1 (303 aa).

9-16 provides a ligand contact to ATP; it reads GPTASGKT. 11-16 is a binding site for substrate; sequence TASGKT. Interaction with substrate tRNA regions lie at residues 34 to 37, 158 to 162, and 239 to 244; these read DSAL, QRLIR, and RCVGYR.

This sequence belongs to the IPP transferase family. Monomer. It depends on Mg(2+) as a cofactor.

It catalyses the reaction adenosine(37) in tRNA + dimethylallyl diphosphate = N(6)-dimethylallyladenosine(37) in tRNA + diphosphate. Catalyzes the transfer of a dimethylallyl group onto the adenine at position 37 in tRNAs that read codons beginning with uridine, leading to the formation of N6-(dimethylallyl)adenosine (i(6)A). The chain is tRNA dimethylallyltransferase 1 from Shewanella sediminis (strain HAW-EB3).